The primary structure comprises 360 residues: Peptide chain release factor 1 (360 aa).

Glutamine 237 carries the N5-methylglutamine modification.

The protein belongs to the prokaryotic/mitochondrial release factor family. In terms of processing, methylated by PrmC. Methylation increases the termination efficiency of RF1.

The protein resides in the cytoplasm. Peptide chain release factor 1 directs the termination of translation in response to the peptide chain termination codons UAG and UAA. This Pseudomonas syringae pv. tomato (strain ATCC BAA-871 / DC3000) protein is Peptide chain release factor 1.